The chain runs to 338 residues: RNA 3'-terminal phosphate cyclase (338 aa).

Residues glutamine 103 and 283–287 (YLADQ) each bind ATP. Catalysis depends on histidine 308, which acts as the Tele-AMP-histidine intermediate.

The protein belongs to the RNA 3'-terminal cyclase family. Type 1 subfamily.

It localises to the cytoplasm. The enzyme catalyses a 3'-end 3'-phospho-ribonucleotide-RNA + ATP = a 3'-end 2',3'-cyclophospho-ribonucleotide-RNA + AMP + diphosphate. Its function is as follows. Catalyzes the conversion of 3'-phosphate to a 2',3'-cyclic phosphodiester at the end of RNA. The mechanism of action of the enzyme occurs in 3 steps: (A) adenylation of the enzyme by ATP; (B) transfer of adenylate to an RNA-N3'P to produce RNA-N3'PP5'A; (C) and attack of the adjacent 2'-hydroxyl on the 3'-phosphorus in the diester linkage to produce the cyclic end product. The biological role of this enzyme is unknown but it is likely to function in some aspects of cellular RNA processing. The sequence is that of RNA 3'-terminal phosphate cyclase from Escherichia coli O127:H6 (strain E2348/69 / EPEC).